A 235-amino-acid chain; its full sequence is Leucyl/phenylalanyl-tRNA--protein transferase (235 aa).

It belongs to the L/F-transferase family.

Its subcellular location is the cytoplasm. The catalysed reaction is N-terminal L-lysyl-[protein] + L-leucyl-tRNA(Leu) = N-terminal L-leucyl-L-lysyl-[protein] + tRNA(Leu) + H(+). It carries out the reaction N-terminal L-arginyl-[protein] + L-leucyl-tRNA(Leu) = N-terminal L-leucyl-L-arginyl-[protein] + tRNA(Leu) + H(+). It catalyses the reaction L-phenylalanyl-tRNA(Phe) + an N-terminal L-alpha-aminoacyl-[protein] = an N-terminal L-phenylalanyl-L-alpha-aminoacyl-[protein] + tRNA(Phe). Functionally, functions in the N-end rule pathway of protein degradation where it conjugates Leu, Phe and, less efficiently, Met from aminoacyl-tRNAs to the N-termini of proteins containing an N-terminal arginine or lysine. This Shewanella frigidimarina (strain NCIMB 400) protein is Leucyl/phenylalanyl-tRNA--protein transferase.